The following is a 237-amino-acid chain: UPF0758 protein Veis_1654 (237 aa).

The 123-residue stretch at 115–237 folds into the MPN domain; the sequence is VFDTPDAVKH…ALSMAEMGLL (123 aa). 3 residues coordinate Zn(2+): H186, H188, and D199. Positions 186–199 match the JAMM motif motif; sequence HNHPSGSVQPSRAD.

Belongs to the UPF0758 family.

The sequence is that of UPF0758 protein Veis_1654 from Verminephrobacter eiseniae (strain EF01-2).